Reading from the N-terminus, the 735-residue chain is MATDSSMPGTVIGKAEFSDTKAASEFGTDLSRWRLNVDNGRHMWEYLESEDEARKRPQSFLEKYWLGLPYELPARPRATCALEAVENGWEFFKRLQTADGHWGCNDDGPLFVTSGMVIARYIVGIPIDSHMKQEMCRYLLNVVNEDGGWGLFIQSPSTVFGTVMNYCMLRILGLGPEHPAMAKARNTLHRLGSARATPTWGKFWLCVLGVYEWEGMVPLPPEPLLVPASLPFNPGKWWVHTRNVYISMSYLYGHRFSMPPNKLVQALRDELYDIPYQQINWPAQRTNVSAADRLTDPTWIQRSFTSALTMYETFKIPFLRRRALNEALFQIETETRNTHYLCIAPVSFASNMLALYHAHGRDSHWIRGMRDRFIDPMWLCREGLAASGTNGTSLWDTALTVQATIDAGLAARPENQAILRKALEFIDNSQIREDPLGVHHVYRQPTRGAWPFSTRDQSYAVSDTTAEAVKVIVLLQRIEGFPSRISDERLQQAIDLILGMENAGGGFSAYEPVRGPKFLELLNITELYENVMTDNLYPECTSSVIMCLTTFAREYPTYRPRDIQACLSRSIDYLLRSQYPNGGWFASWGVCFTYATMFALQGLACMGWNESNCAACQRACSFLLQHQNPDGGWGESLDTVRFKQYLPHPDGSQVTNTAYAVIGLLAARCGNHEAIRRGVAYLVKEQQDTGEWLPGPLEGVFAPPGGMRYPNYKFHFTLMALGRYVAIHGNECLAI.

Residues 132 to 173 (KQEMCRYLLNVVNEDGGWGLFIQSPSTVFGTVMNYCMLRILG) form a PFTB 1 repeat. D463 (proton donor) is an active-site residue. PFTB repeat units follow at residues 490 to 531 (LQQA…YENV), 567 to 607 (LSRS…ACMG), and 616 to 663 (CQRA…AVIG).

It belongs to the terpene cyclase/mutase family.

It catalyses the reaction (S)-2,3-epoxysqualene = (17Z)-protosta-17(20),24-dien-3beta-ol. Its pathway is mycotoxin biosynthesis. Its function is as follows. Protostadienol synthase; part of the gene cluster that mediates the biosynthesis of helvolic acid, an antibacterial nortriterpenoid. Protostadienol synthase helA cyclizes (3S)-oxidosqualene to (17Z)-protosta-17(20),24-dien-3-beta-ol (protostadienol). The synthesis of protostadienol is followed by several steps of monooxygenation, dehydrogenation, and acyl transfer to yield the final helvolic acid. Following the cyclization to the tetracyclic protostadienol by helA, cytochrome P450 monooxygenases helB1-mediated and helB2-mediated oxidation at C-4 and C-16, acyltransferase helD2-dependent acetylation of 16-OH, oxidation of C-21 by cytochrome P450 monooxygenase helB4, and short chain dehydrogenase helC-dependent oxidative decarboxylation yield the fusidane skeleton. This intermediate is further modified in three additional steps mediated by the cytochrome P450 monooxygenase helB3, the acyltransferase helD1, and the 3-ketosteroid 1-dehydrogenase helE to give helvolic acid. Compared with the late stages in the biosynthesis of helvolic acid, enzymes involved in the early stage modifications act in a relatively strict order. The hydroxylation of C-16 by helB1 and subsequent acetylation by helD2 should occur before the helB3-mediated oxidation of C-21. C-4 demethylation in fusidane-type antibiotics proceeds in an unusual manner though it is also achieved by oxidative decarboxylation. The methyl group at C-4 beta position is oxidized by helB1 and subsequently removed by the short chain dehydrogenase helC. The sequence is that of Protostadienol synthase helA from Aspergillus fumigatus (strain ATCC MYA-4609 / CBS 101355 / FGSC A1100 / Af293) (Neosartorya fumigata).